The primary structure comprises 64 residues: Putative antitoxin VapB4 (64 aa).

The protein belongs to the UPF0165 family.

Its function is as follows. Possibly the antitoxin component of a type II toxin-antitoxin (TA) system. Its cognate toxin is VapC4 (Potential). This chain is Putative antitoxin VapB4 (vapB4), found in Archaeoglobus fulgidus (strain ATCC 49558 / DSM 4304 / JCM 9628 / NBRC 100126 / VC-16).